Here is a 422-residue protein sequence, read N- to C-terminus: MKLHGLGILVAIILYEQHGFAFQSGQVLSALPRTSRQVQLLQNLTTTYEVVLWQPVTAEFIEKKKEVHFFVNASDVDSVKAHLNVSRIPFNVLMNNVEDLIEQQTFNDTVSPRASASYYEQYHSLNEIYSWIEVITEQHPDMLQKIYIGSSFEKYPLYVLKVSGKEQRIKNAIWIDCGIHAREWISPAFCLWFIGYVTQFHGKENLYTRLLRHVDFYIMPVMNVDGYDYTWKKNRMWRKNRSAHKNNRCVGTDLNRNFASKHWCEKGASSSSCSETYCGLYPESEPEVKAVADFLRRNIDHIKAYISMHSYSQQILFPYSYNRSKSKDHEELSLVASEAVRAIESINKNTRYTHGSGSESLYLAPGGSDDWIYDLGIKYSFTIELRDTGRYGFLLPERYIKPTCAEALAAISKIVWHVIRNT.

A signal peptide spans 1-21; sequence MKLHGLGILVAIILYEQHGFA. Positions 22–113 are cleaved as a propeptide — activation peptide; the sequence is FQSGQVLSAL…QTFNDTVSPR (92 aa). N-linked (GlcNAc...) asparagine glycosylation is found at N43, N72, N84, and N107. In terms of domain architecture, Peptidase M14 spans 121 to 418; sequence QYHSLNEIYS…AAISKIVWHV (298 aa). Cysteines 177 and 190 form a disulfide. Residues H180 and E183 each coordinate Zn(2+). Substrate contacts are provided by residues 180 to 183 and R238; that span reads HARE. The N-linked (GlcNAc...) asparagine glycan is linked to N240. 2 disulfides stabilise this stretch: C249–C273 and C264–C278. 255 to 256 lines the substrate pocket; it reads NR. H309 contacts Zn(2+). 310-311 contacts substrate; sequence SY. Residue N322 is glycosylated (N-linked (GlcNAc...) asparagine). Residue Y362 participates in substrate binding. E384 serves as the catalytic Proton donor/acceptor.

Belongs to the peptidase M14 family. Zn(2+) serves as cofactor. In terms of tissue distribution, plasma; synthesized in the liver.

Its subcellular location is the secreted. It catalyses the reaction Release of C-terminal Arg and Lys from a polypeptide.. TAFI/CPB2 is unique among carboxypeptidases in that it spontaneously inactivates with a short half-life, a property that is crucial for its role in controlling blood clot lysis. The zymogen is stabilized by interactions with the activation peptide. Release of the activation peptide increases a dynamic flap mobility and in time this leads to conformational changes that disrupt the catalytic site and expose a cryptic thrombin-cleavage site present at Arg-323. Cleaves C-terminal arginine or lysine residues from biologically active peptides such as kinins or anaphylatoxins in the circulation thereby regulating their activities. Down-regulates fibrinolysis by removing C-terminal lysine residues from fibrin that has already been partially degraded by plasmin. The polypeptide is Carboxypeptidase B2 (Cpb2) (Mus musculus (Mouse)).